Reading from the N-terminus, the 125-residue chain is Large ribosomal subunit protein bL12 (125 aa).

It belongs to the bacterial ribosomal protein bL12 family. Homodimer. Part of the ribosomal stalk of the 50S ribosomal subunit. Forms a multimeric L10(L12)X complex, where L10 forms an elongated spine to which 2 to 4 L12 dimers bind in a sequential fashion. Binds GTP-bound translation factors.

Its function is as follows. Forms part of the ribosomal stalk which helps the ribosome interact with GTP-bound translation factors. Is thus essential for accurate translation. The polypeptide is Large ribosomal subunit protein bL12 (Liberibacter africanus (Citrus greening disease)).